A 180-amino-acid chain; its full sequence is Large ribosomal subunit protein uL5 (180 aa).

It belongs to the universal ribosomal protein uL5 family. Part of the 50S ribosomal subunit; part of the 5S rRNA/L5/L18/L25 subcomplex. Contacts the 5S rRNA and the P site tRNA. Forms a bridge to the 30S subunit in the 70S ribosome.

Its function is as follows. This is one of the proteins that bind and probably mediate the attachment of the 5S RNA into the large ribosomal subunit, where it forms part of the central protuberance. In the 70S ribosome it contacts protein S13 of the 30S subunit (bridge B1b), connecting the 2 subunits; this bridge is implicated in subunit movement. Contacts the P site tRNA; the 5S rRNA and some of its associated proteins might help stabilize positioning of ribosome-bound tRNAs. The polypeptide is Large ribosomal subunit protein uL5 (Heliobacterium modesticaldum (strain ATCC 51547 / Ice1)).